The chain runs to 237 residues: MSDVTTAEFNEEGKYLRKVRSFVLREGRLTKGQAQAMEQQWPSMGLDYTPEAIDLVEVFGREADTVLEIGFGMGGSLVEMAKASPELNFIGIEVHKPGVGACLSVAAEAGVTNLRVYHHDALEVLENSIAEGSLARVQLFFPDPWHKKRHHKRRIVQAPFAELIRSKLKVGGVFHLATDWENYSEHMLEVMTAAPGYKNQSATGDVVERPEHRPLTKFEARGHRLGHGVWDLMFERV.

Positions 68, 93, 120, and 143 each coordinate S-adenosyl-L-methionine. Residue Asp-143 is part of the active site. Substrate is bound by residues Lys-147, Asp-179, and 216–219 (TKFE).

It belongs to the class I-like SAM-binding methyltransferase superfamily. TrmB family.

The enzyme catalyses guanosine(46) in tRNA + S-adenosyl-L-methionine = N(7)-methylguanosine(46) in tRNA + S-adenosyl-L-homocysteine. It functions in the pathway tRNA modification; N(7)-methylguanine-tRNA biosynthesis. Functionally, catalyzes the formation of N(7)-methylguanine at position 46 (m7G46) in tRNA. In Shewanella piezotolerans (strain WP3 / JCM 13877), this protein is tRNA (guanine-N(7)-)-methyltransferase.